Consider the following 245-residue polypeptide: tRNA1(Val) (adenine(37)-N6)-methyltransferase (245 aa).

It belongs to the methyltransferase superfamily. tRNA (adenine-N(6)-)-methyltransferase family.

The protein localises to the cytoplasm. It catalyses the reaction adenosine(37) in tRNA1(Val) + S-adenosyl-L-methionine = N(6)-methyladenosine(37) in tRNA1(Val) + S-adenosyl-L-homocysteine + H(+). Functionally, specifically methylates the adenine in position 37 of tRNA(1)(Val) (anticodon cmo5UAC). In Salmonella enteritidis PT4 (strain P125109), this protein is tRNA1(Val) (adenine(37)-N6)-methyltransferase.